We begin with the raw amino-acid sequence, 127 residues long: DNA-directed RNA polymerases I, II, and III subunit RPABC2 (127 aa).

A compositionally biased stretch (acidic residues) spans 1–32; it reads MSDNEDNFDGDDFDDVEEDEGLDDLENAEEEG. A disordered region spans residues 1 to 52; that stretch reads MSDNEDNFDGDDFDDVEEDEGLDDLENAEEEGQVNVEILPSGERPQANQKRI. Ser-2 carries the N-acetylserine modification. Residue Ser-2 is modified to Phosphoserine; by CK2.

It belongs to the archaeal Rpo6/eukaryotic RPB6 RNA polymerase subunit family. Component of the RNA polymerase I (Pol I), RNA polymerase II (Pol II) and RNA polymerase III (Pol III) complexes consisting of at least 13, 12 and 17 subunits, respectively. Pol I complex consists of a ten-subunit catalytic core composed of POLR1A/RPA1, POLR1B/RPA2, POLR1C/RPAC1, POLR1D/RPAC2, POLR1H/RPA12, POLR2E/RPABC1, POLR2F/RPABC2, POLR2H/RPABC3, POLR2K/RPABC4 and POLR2L/RPABC5; a mobile stalk subunit POLR1F/RPA43 protruding from the core and additional subunits homologous to general transcription factors POLR1E/RPA49 and POLR1G/RPA34. Part of Pol I pre-initiation complex (PIC), in which Pol I core assembles with RRN3 and promoter-bound UTBF and SL1/TIF-IB complex. Pol II complex contains a ten-subunit catalytic core composed of POLR2A/RPB1, POLR2B/RPB2, POLR2C/RPB3, POLR2I/RPB9, POLR2J/RPB11, POLR2E/RPABC1, POLR2F/RPABC2, POLR2H/RPABC3, POLR2K/RPABC4 and POLR2L/RPABC5 and a mobile stalk composed of two subunits POLR2D/RPB4 and POLR2G/RPB7. Part of Pol II(G) complex, in which Pol II core associates with an additional subunit POLR2M; unlike conventional Pol II, Pol II(G) functions as a transcriptional repressor. Part of TBP-based Pol II pre-initiation complex (PIC), in which Pol II core assembles with general transcription factors and other specific initiation factors including GTF2E1, GTF2E2, GTF2F1, GTF2F2, TCEA1, ERCC2, ERCC3, GTF2H2, GTF2H3, GTF2H4, GTF2H5, GTF2A1, GTF2A2, GTF2B and TBP; this large multi-subunit PIC complex mediates DNA unwinding and targets Pol II core to the transcription start site where the first phosphodiester bond forms. Pol III complex consists of a ten-subunit catalytic core composed of POLR3A/RPC1, POLR3B/RPC2, POLR1C/RPAC1, POLR1D/RPAC2, POLR3K/RPC10, POLR2E/RPABC1, POLR2F/RPABC2, POLR2H/RPABC3, POLR2K/RPABC4 and POLR2L/RPABC5; a mobile stalk composed of two subunits POLR3H/RPC8 and CRCP/RPC9, protruding from the core and functioning primarily in transcription initiation; and additional subunits homologous to general transcription factors of the RNA polymerase II machinery, POLR3C/RPC3-POLR3F/RPC6-POLR3G/RPC7 heterotrimer required for transcription initiation and POLR3D/RPC4-POLR3E/RPC5 heterodimer involved in both transcription initiation and termination.

Its subcellular location is the nucleus. It localises to the nucleolus. Its function is as follows. DNA-dependent RNA polymerase catalyzes the transcription of DNA into RNA using the four ribonucleoside triphosphates as substrates. Common component of RNA polymerases I, II, and III which synthesize ribosomal RNA precursors, mRNA precursors and many functional non-coding RNAs, and small RNAs, such as 5S rRNA and tRNAs, respectively. Pol II is the central component of the basal RNA polymerase II transcription machinery. Pols are composed of mobile elements that move relative to each other. In Pol II, POLR2F/RPABC2 is part of the clamp element and together with parts of POLR2A/RPB1 and POLR2B/RPB2 forms a pocket to which the POLR2D/RPB4-POLR2G/RPB7 subcomplex binds. In Bos taurus (Bovine), this protein is DNA-directed RNA polymerases I, II, and III subunit RPABC2 (POLR2F).